The chain runs to 438 residues: DNA primase DnaG (438 aa).

Residues 171–245 enclose the Toprim domain; sequence DAILVVEGRA…DIDYVARAPE (75 aa). 3 residues coordinate Mg(2+): Glu177, Asp219, and Asp221.

The protein belongs to the archaeal DnaG primase family. Forms a ternary complex with MCM helicase and DNA. Component of the archaeal exosome complex. Requires Mg(2+) as cofactor.

It catalyses the reaction ssDNA + n NTP = ssDNA/pppN(pN)n-1 hybrid + (n-1) diphosphate.. Its function is as follows. RNA polymerase that catalyzes the synthesis of short RNA molecules used as primers for DNA polymerase during DNA replication. Also part of the exosome, which is a complex involved in RNA degradation. Acts as a poly(A)-binding protein that enhances the interaction between heteromeric, adenine-rich transcripts and the exosome. The polypeptide is DNA primase DnaG (Methanothrix thermoacetophila (strain DSM 6194 / JCM 14653 / NBRC 101360 / PT) (Methanosaeta thermophila)).